We begin with the raw amino-acid sequence, 242 residues long: Venom nerve growth factor (242 aa).

An N-terminal signal peptide occupies residues 1 to 18 (MSMMCYTLIIAFLIGIWA). Positions 19–125 (APKSEDNVPL…TLNRNIRAKR (107 aa)) are excised as a propeptide. Over residues 47-66 (GLKTSRNTDQRHPAPKKAED) the composition is skewed to basic and acidic residues. A disordered region spans residues 47–70 (GLKTSRNTDQRHPAPKKAEDQELG). 3 disulfides stabilise this stretch: cysteine 139/cysteine 203, cysteine 181/cysteine 231, and cysteine 191/cysteine 233. The N-linked (GlcNAc...) asparagine glycan is linked to asparagine 166.

This sequence belongs to the NGF-beta family. In terms of assembly, homodimer; non-covalently linked. As to expression, expressed by the venom gland.

The protein localises to the secreted. Functionally, nerve growth factor is important for the development and maintenance of the sympathetic and sensory nervous systems. It stimulates division and differentiation of sympathetic and embryonic sensory neurons as well as basal forebrain cholinergic neurons in the brain. Its relevance in the snake venom is not clear. However, it has been shown to inhibit metalloproteinase-dependent proteolysis of platelet glycoprotein Ib alpha, suggesting a metalloproteinase inhibition to prevent metalloprotease autodigestion and/or protection against prey proteases. Binds a lipid between the two protein chains in the homodimer. The lipid-bound form promotes histamine relase from mouse mast cells, contrary to the lipid-free form. This chain is Venom nerve growth factor, found in Drysdalia coronoides (White-lipped snake).